The primary structure comprises 98 residues: NADH-ubiquinone oxidoreductase chain 4L (98 aa).

3 helical membrane passes run 1-21, 25-45, and 67-87; these read MSLVYMNIMIAFSISLLGLLM, HLMSSLLCLEGMMLALFILST, and AACEAAVGLSLLVMVSNTYGV.

Belongs to the complex I subunit 4L family. As to quaternary structure, core subunit of respiratory chain NADH dehydrogenase (Complex I) which is composed of 45 different subunits.

It is found in the mitochondrion inner membrane. It carries out the reaction a ubiquinone + NADH + 5 H(+)(in) = a ubiquinol + NAD(+) + 4 H(+)(out). In terms of biological role, core subunit of the mitochondrial membrane respiratory chain NADH dehydrogenase (Complex I) which catalyzes electron transfer from NADH through the respiratory chain, using ubiquinone as an electron acceptor. Part of the enzyme membrane arm which is embedded in the lipid bilayer and involved in proton translocation. This chain is NADH-ubiquinone oxidoreductase chain 4L (MT-ND4L), found in Talpa europaea (European mole).